Reading from the N-terminus, the 118-residue chain is Thioredoxin H-type (118 aa).

Residues 2 to 114 (AAEEGQVIGC…LQQTIAKHMA (113 aa)) enclose the Thioredoxin domain. Residues Cys-40 and Cys-43 each act as nucleophile in the active site. A disulfide bond links Cys-40 and Cys-43.

This sequence belongs to the thioredoxin family. Plant H-type subfamily.

The protein localises to the cytoplasm. In terms of biological role, participates in various redox reactions through the reversible oxidation of the active center dithiol to a disulfide. The H form is known to activate a number of cytosolic enzymes. In Ricinus communis (Castor bean), this protein is Thioredoxin H-type.